We begin with the raw amino-acid sequence, 103 residues long: Small ribosomal subunit protein eS25 (103 aa).

The disordered stretch occupies residues 1–23 (MGGEDMAKKKAPSAKEGEKQQGF).

The protein belongs to the eukaryotic ribosomal protein eS25 family.

The polypeptide is Small ribosomal subunit protein eS25 (rps25e) (Aeropyrum pernix (strain ATCC 700893 / DSM 11879 / JCM 9820 / NBRC 100138 / K1)).